The sequence spans 240 residues: Uridylate kinase (240 aa).

13-16 (KLSG) is a binding site for ATP. Residues 21–26 (GEKGFG) are involved in allosteric activation by GTP. A UMP-binding site is contributed by glycine 55. Residues glycine 56 and arginine 60 each coordinate ATP. Residues aspartate 75 and 136–143 (IGNPYFST) contribute to the UMP site. 3 residues coordinate ATP: asparagine 164, tyrosine 170, and aspartate 173.

It belongs to the UMP kinase family. As to quaternary structure, homohexamer.

It is found in the cytoplasm. The catalysed reaction is UMP + ATP = UDP + ADP. It functions in the pathway pyrimidine metabolism; CTP biosynthesis via de novo pathway; UDP from UMP (UMPK route): step 1/1. With respect to regulation, allosterically activated by GTP. Inhibited by UTP. Functionally, catalyzes the reversible phosphorylation of UMP to UDP. The protein is Uridylate kinase of Staphylococcus aureus (strain Newman).